Reading from the N-terminus, the 465-residue chain is uncharacterized protein (465 aa).

Disordered regions lie at residues 1–55 (MNSS…SSHQ), 70–164 (DFSE…VEGQ), and 221–313 (TTDN…KQRV). A compositionally biased stretch (basic and acidic residues) spans 40–50 (ENYKDNSDHSN). Residues 73-82 (ESFNDNQNLK) are compositionally biased toward polar residues. Residues 83–134 (NFNTTDNNFNDDYNNDYDSNNDSNNDSNNDSNNDYDNESNNYFNNDSNNDSN) show a composition bias toward low complexity. Positions 141–150 (ETTKHKLPIE) are enriched in basic and acidic residues. The span at 221 to 235 (TTDNQSNTESSQENN) shows a compositional bias: low complexity. Composition is skewed to basic and acidic residues over residues 236-249 (VIKKEPNNKLDKQP) and 259-275 (IVPKQETDKKSPVKSIK). A compositionally biased stretch (polar residues) spans 288-306 (IDQSNKLGKSYNTNNNNSK). The stretch at 390 to 423 (NKASIAELKKMRLEQRKREIEEKRRQVENKKPDS) forms a coiled coil.

This is an uncharacterized protein from Acanthamoeba polyphaga mimivirus (APMV).